Here is a 562-residue protein sequence, read N- to C-terminus: Arginine--tRNA ligase (562 aa).

The short motif at 121-131 (PNIAKPFSVGH) is the 'HIGH' region element.

Belongs to the class-I aminoacyl-tRNA synthetase family. Monomer.

It localises to the cytoplasm. It catalyses the reaction tRNA(Arg) + L-arginine + ATP = L-arginyl-tRNA(Arg) + AMP + diphosphate. This chain is Arginine--tRNA ligase, found in Streptococcus uberis (strain ATCC BAA-854 / 0140J).